Here is a 286-residue protein sequence, read N- to C-terminus: uncharacterized protein (286 aa).

This sequence belongs to the NmrA-type oxidoreductase family.

This is an uncharacterized protein from Bacillus subtilis (strain 168).